Here is a 489-residue protein sequence, read N- to C-terminus: Betaine aldehyde dehydrogenase (489 aa).

K(+)-binding residues include threonine 26 and aspartate 93. 150–152 (GAW) is a binding site for NAD(+). Catalysis depends on lysine 162, which acts as the Charge relay system. 176 to 179 (KPSE) serves as a coordination point for NAD(+). Valine 180 serves as a coordination point for K(+). 229–232 (GVET) serves as a coordination point for NAD(+). Residue leucine 245 coordinates K(+). Glutamate 251 acts as the Proton acceptor in catalysis. 3 residues coordinate NAD(+): glycine 253, cysteine 285, and glutamate 386. Catalysis depends on cysteine 285, which acts as the Nucleophile. Cysteine 285 is modified (cysteine sulfenic acid (-SOH)). K(+) is bound by residues lysine 456 and glycine 459. Glutamate 463 serves as the catalytic Charge relay system.

Belongs to the aldehyde dehydrogenase family. As to quaternary structure, dimer of dimers. Requires K(+) as cofactor.

It carries out the reaction betaine aldehyde + NAD(+) + H2O = glycine betaine + NADH + 2 H(+). It functions in the pathway amine and polyamine biosynthesis; betaine biosynthesis via choline pathway; betaine from betaine aldehyde: step 1/1. Involved in the biosynthesis of the osmoprotectant glycine betaine. Catalyzes the irreversible oxidation of betaine aldehyde to the corresponding acid. This chain is Betaine aldehyde dehydrogenase, found in Burkholderia pseudomallei (strain 668).